Here is a 560-residue protein sequence, read N- to C-terminus: Probable 2,3-bisphosphoglycerate-independent phosphoglycerate mutase 2 (560 aa).

Position 2 is an N-acetylglycine (G2). Mn(2+) is bound by residues D29 and S82. The active-site Phosphoserine intermediate is the S82. Substrate is bound by residues H141, 171–172, R207, R214, 287–290, and K362; these read RD and RADR. Residues D431, H435, D472, H473, and H502 each contribute to the Mn(2+) site.

Belongs to the BPG-independent phosphoglycerate mutase family. As to quaternary structure, monomer. The cofactor is Mn(2+).

The protein resides in the cytoplasm. It catalyses the reaction (2R)-2-phosphoglycerate = (2R)-3-phosphoglycerate. Its pathway is carbohydrate degradation; glycolysis; pyruvate from D-glyceraldehyde 3-phosphate: step 3/5. Catalyzes the interconversion of 2-phosphoglycerate (2-PGA) and 3-phosphoglycerate (3-PGA). Required for guard cell function (e.g. blue light-, abscisic acid- (ABA), and low CO(2)-regulated stomatal movements) and fertility (e.g. pollen grains production). This chain is Probable 2,3-bisphosphoglycerate-independent phosphoglycerate mutase 2 (PGM2), found in Arabidopsis thaliana (Mouse-ear cress).